Reading from the N-terminus, the 241-residue chain is Uridylate kinase (241 aa).

Residue 15–18 (KMSG) coordinates ATP. Residues 23 to 28 (GAEGFG) form an involved in allosteric activation by GTP region. Gly57 provides a ligand contact to UMP. ATP contacts are provided by Gly58 and Arg62. UMP is bound by residues Asp77 and 138–145 (TGNPLFTT). ATP is bound by residues Thr165, Phe171, and Asp174.

The protein belongs to the UMP kinase family. As to quaternary structure, homohexamer.

It localises to the cytoplasm. It carries out the reaction UMP + ATP = UDP + ADP. It participates in pyrimidine metabolism; CTP biosynthesis via de novo pathway; UDP from UMP (UMPK route): step 1/1. With respect to regulation, allosterically activated by GTP. Inhibited by UTP. Functionally, catalyzes the reversible phosphorylation of UMP to UDP. The sequence is that of Uridylate kinase from Blochmanniella pennsylvanica (strain BPEN).